The chain runs to 284 residues: Stomatin (284 aa).

Residues M1 to G31 are Cytoplasmic-facing. S18 carries the post-translational modification Phosphoserine. C30 carries S-palmitoyl cysteine lipidation. An intramembrane segment occupies W32–I52. Residues C53–H284 lie on the Cytoplasmic side of the membrane. C87 carries S-palmitoyl cysteine lipidation. Residues S161 and S244 each carry the phosphoserine modification. The interval S265 to V273 is required for homooligomerization. The interval I267–F269 is required for lipid raft association. Positions V273 to H284 are interaction with LANCL1.

Belongs to the band 7/mec-2 family. As to quaternary structure, interacts with LANCL1. Interacts with SLC2A1. Interacts with SLC4A1; this interaction positively regulates SLC4A1 activity. Identified in large complexes with SLC40A1, SLC14A1, SLC29A1 and AQP1. Homodimer and higher order homooligomers. The homodimer is banana-shaped. Interacts with ASIC1, ASIC2 and ASIC3. Interacts with STOML1; may redistribute STOM from the plasma membrane to late endosomes. As to expression, expressed in all sensory neurons of the dorsal root ganglia. In the CNS, expressed in many neurons of the spinal cord, medulla and pons. Expressed only in scattered neurons in the cortex, hippocampus, thalamus and basal ganglia. In the cerebellum, expressed in all Purkinje cells (at protein level). Widely expressed with high levels in heart, liver, skeletal muscle and testis and low levels in lung, brain and spleen.

The protein localises to the cell membrane. The protein resides in the cytoplasm. It localises to the cytoskeleton. Its subcellular location is the membrane raft. It is found in the melanosome. The protein localises to the cytoplasmic vesicle. In terms of biological role, regulates ion channel activity and transmembrane ion transport. Regulates ASIC2 and ASIC3 channel activity. The sequence is that of Stomatin from Mus musculus (Mouse).